Reading from the N-terminus, the 198-residue chain is Probable GTP-binding protein EngB (198 aa).

The region spanning 22–195 is the EngB-type G domain; that stretch reads DLPEIALAGR…WKAIHKMTKT (174 aa). GTP is bound by residues 30–37, 57–61, 75–78, 142–145, and 174–176; these read GRSNVGKS, GKTQT, DVPG, TKAD, and FSS. Mg(2+) is bound by residues serine 37 and threonine 59.

Belongs to the TRAFAC class TrmE-Era-EngA-EngB-Septin-like GTPase superfamily. EngB GTPase family. Requires Mg(2+) as cofactor.

Functionally, necessary for normal cell division and for the maintenance of normal septation. This Bacillus mycoides (strain KBAB4) (Bacillus weihenstephanensis) protein is Probable GTP-binding protein EngB.